The following is a 66-amino-acid chain: DNA gyrase inhibitor YacG (66 aa).

Residues Cys-9, Cys-12, Cys-28, and Cys-32 each contribute to the Zn(2+) site.

Belongs to the DNA gyrase inhibitor YacG family. Interacts with GyrB. Requires Zn(2+) as cofactor.

Its function is as follows. Inhibits all the catalytic activities of DNA gyrase by preventing its interaction with DNA. Acts by binding directly to the C-terminal domain of GyrB, which probably disrupts DNA binding by the gyrase. This chain is DNA gyrase inhibitor YacG, found in Pseudomonas fluorescens (strain Pf0-1).